Consider the following 177-residue polypeptide: Parathyroid hormone-related protein (177 aa).

Residues 1 to 24 (MLRRLVQQWGVAVFLLSYSVPSCG) form the signal peptide. The propeptide occupies 25–34 (RSVEELGRRL). An important for receptor binding region spans residues 57–68 (RFFLHHLIAEIH). Positions 74–177 (ATSEVSPNSK…TSLELNLRRH (104 aa)) are disordered. The span at 76–90 (SEVSPNSKPAPNTKN) shows a compositional bias: polar residues. The Nuclear localization signal motif lies at 108-129 (TNKVETYKEQPLKTPGKKKKGK). Residues 109 to 118 (NKVETYKEQP) are compositionally biased toward basic and acidic residues. Over residues 122–132 (PGKKKKGKPGK) the composition is skewed to basic residues.

This sequence belongs to the parathyroid hormone family. As to quaternary structure, PTHrP interacts with PTH1R (via N-terminal extracellular domain). There are several secretory forms, including osteostatin, arising from endoproteolytic cleavage of the initial translation product. Each of these secretory forms is believed to have one or more of its own receptors that mediates the normal paracrine, autocrine and endocrine actions.

It localises to the secreted. The protein localises to the cytoplasm. It is found in the nucleus. Functionally, neuroendocrine peptide which is a critical regulator of cellular and organ growth, development, migration, differentiation and survival and of epithelial calcium ion transport. Acts by binding to its receptor, PTH1R, activating G protein-coupled receptor signaling. Regulates endochondral bone development and epithelial-mesenchymal interactions during the formation of the mammary glands and teeth. Required for skeletal homeostasis. Promotes mammary mesenchyme differentiation and bud outgrowth by modulating mesenchymal cell responsiveness to BMPs. Up-regulates BMPR1A expression in the mammary mesenchyme and this increases the sensitivity of these cells to BMPs and allows them to respond to BMP4 in a paracrine and/or autocrine fashion. BMP4 signaling in the mesenchyme, in turn, triggers epithelial outgrowth and augments MSX2 expression, which causes the mammary mesenchyme to inhibit hair follicle formation within the nipple sheath. In terms of biological role, potent inhibitor of osteoclastic bone resorption. The chain is Parathyroid hormone-related protein (PTHLH) from Canis lupus familiaris (Dog).